Here is a 148-residue protein sequence, read N- to C-terminus: Snaclec jerdonuxin subunit beta (148 aa).

The first 23 residues, 1–23 (MVRFIFVSFGLLVVFLSLSGIGA), serve as a signal peptide directing secretion. Disulfide bonds link Cys-27/Cys-38, Cys-55/Cys-144, and Cys-121/Cys-136. In terms of domain architecture, C-type lectin spans 34–145 (YDEHCYQVFQ…CSSKRYIVCK (112 aa)).

This sequence belongs to the snaclec family. As to quaternary structure, tetramer of 4 heterodimers of alpha and beta subunits; disulfide-linked. As to expression, expressed by the venom gland.

It is found in the secreted. Its function is as follows. Snaclec that strongly induces platelet aggregation, in a dose-dependent manner. The polypeptide is Snaclec jerdonuxin subunit beta (Protobothrops jerdonii (Jerdon's pitviper)).